Consider the following 316-residue polypeptide: Transaldolase 2 (316 aa).

The active-site Schiff-base intermediate with substrate is K131.

The protein belongs to the transaldolase family. Type 1 subfamily. Homodimer.

The protein resides in the cytoplasm. It carries out the reaction D-sedoheptulose 7-phosphate + D-glyceraldehyde 3-phosphate = D-erythrose 4-phosphate + beta-D-fructose 6-phosphate. The protein operates within carbohydrate degradation; pentose phosphate pathway; D-glyceraldehyde 3-phosphate and beta-D-fructose 6-phosphate from D-ribose 5-phosphate and D-xylulose 5-phosphate (non-oxidative stage): step 2/3. Its function is as follows. Transaldolase is important for the balance of metabolites in the pentose-phosphate pathway. The chain is Transaldolase 2 from Shigella sonnei (strain Ss046).